The chain runs to 146 residues: Large ribosomal subunit protein uL15 (146 aa).

Residues 1-10 (MKLHELKPAE) show a composition bias toward basic and acidic residues. The interval 1–51 (MKLHELKPAEGSRQVRNRVGRGTSSGNGKTAGRGQKGQKARSGGGVRLGFE) is disordered. Gly residues-rich tracts occupy residues 23–35 (TSSG…GRGQ) and 42–51 (SGGGVRLGFE).

Belongs to the universal ribosomal protein uL15 family. Part of the 50S ribosomal subunit.

In terms of biological role, binds to the 23S rRNA. The protein is Large ribosomal subunit protein uL15 of Enterococcus faecalis (strain ATCC 700802 / V583).